The following is a 535-amino-acid chain: uncharacterized protein (535 aa).

Residues 8-24 traverse the membrane as a helical segment; it reads LVVFGSLVFFFGLVKYF. Lys50 participates in a covalent cross-link: Glycyl lysine isopeptide (Lys-Gly) (interchain with G-Cter in ubiquitin). The Mn(2+) site is built by Asp316, Asp327, His412, Glu452, and Glu493.

It belongs to the peptidase M24B family. Mn(2+) is required as a cofactor.

The protein resides in the membrane. This is an uncharacterized protein from Saccharomyces cerevisiae (strain ATCC 204508 / S288c) (Baker's yeast).